The primary structure comprises 330 residues: Ribosomal RNA small subunit methyltransferase H (330 aa).

Residues 51–53, aspartate 70, aspartate 118, and glutamine 125 contribute to the S-adenosyl-L-methionine site; that span reads GGH. The tract at residues 276-330 is disordered; the sequence is STDSTPPGLPVPLPDRQPELRLLTRGAELPTEQETAANPRAASARLRAAERTREP. The span at 311–321 shows a compositional bias: low complexity; it reads AANPRAASARL.

This sequence belongs to the methyltransferase superfamily. RsmH family.

The protein localises to the cytoplasm. The catalysed reaction is cytidine(1402) in 16S rRNA + S-adenosyl-L-methionine = N(4)-methylcytidine(1402) in 16S rRNA + S-adenosyl-L-homocysteine + H(+). In terms of biological role, specifically methylates the N4 position of cytidine in position 1402 (C1402) of 16S rRNA. This Thermobifida fusca (strain YX) protein is Ribosomal RNA small subunit methyltransferase H.